The sequence spans 428 residues: Dihydroorotase (428 aa).

Zn(2+)-binding residues include histidine 59 and histidine 61. Residues 61–63 and asparagine 93 each bind substrate; that span reads HLR. Aspartate 151, histidine 178, and histidine 231 together coordinate Zn(2+). Asparagine 277 is a binding site for substrate. Aspartate 304 serves as a coordination point for Zn(2+). Aspartate 304 is a catalytic residue. Substrate contacts are provided by residues histidine 308 and 322–323; that span reads FG.

Belongs to the metallo-dependent hydrolases superfamily. DHOase family. Class I DHOase subfamily. Requires Zn(2+) as cofactor.

It catalyses the reaction (S)-dihydroorotate + H2O = N-carbamoyl-L-aspartate + H(+). Its pathway is pyrimidine metabolism; UMP biosynthesis via de novo pathway; (S)-dihydroorotate from bicarbonate: step 3/3. Functionally, catalyzes the reversible cyclization of carbamoyl aspartate to dihydroorotate. This chain is Dihydroorotase, found in Bacillus cytotoxicus (strain DSM 22905 / CIP 110041 / 391-98 / NVH 391-98).